The primary structure comprises 163 residues: MKSSVCVLLKVLACILLPGGLNAQKESNDDIQHYTADDCQVTPVIHVLQYPGCVPKPIPSFACIGRCASYIQVSGSKIWQMERSCMCCQESGEREASVSLFCPKAKNGEKKFKKVSTKAPLECMCRPCTGIEDANVIPQELAAFADDGSLAGYFQKSQFKAAE.

Positions 1–23 (MKSSVCVLLKVLACILLPGGLNA) are cleaved as a signal peptide. Intrachain disulfides connect C39–C88, C53–C102, C63–C123, C67–C125, and C85–C128. The CTCK domain occupies 39 to 129 (CQVTPVIHVL…PLECMCRPCT (91 aa)).

Heterodimer of burs and pburs.

Its subcellular location is the secreted. Its function is as follows. Final heterodimeric neurohormone released at the end of the molting cycle, involved in the sclerotization (tanning) of the insect cuticle, melanization and wing spreading. The polypeptide is Bursicon (Aedes aegypti (Yellowfever mosquito)).